The chain runs to 361 residues: Aminomethyltransferase (361 aa).

Belongs to the GcvT family. As to quaternary structure, the glycine cleavage system is composed of four proteins: P, T, L and H.

It catalyses the reaction N(6)-[(R)-S(8)-aminomethyldihydrolipoyl]-L-lysyl-[protein] + (6S)-5,6,7,8-tetrahydrofolate = N(6)-[(R)-dihydrolipoyl]-L-lysyl-[protein] + (6R)-5,10-methylene-5,6,7,8-tetrahydrofolate + NH4(+). The glycine cleavage system catalyzes the degradation of glycine. The chain is Aminomethyltransferase from Bacteroides fragilis (strain ATCC 25285 / DSM 2151 / CCUG 4856 / JCM 11019 / LMG 10263 / NCTC 9343 / Onslow / VPI 2553 / EN-2).